A 417-amino-acid polypeptide reads, in one-letter code: NADH-dependent phenylglyoxylate dehydrogenase subunit alpha (417 aa).

As to quaternary structure, dimer of heteropentamers composed of an alpha (PadG), a beta (PadI), a gamma (PadE), a delta (PadF) and an epsilon (PadH) subunit.

It catalyses the reaction phenylglyoxylate + NAD(+) + CoA = benzoyl-CoA + CO2 + NADH. Activated by magnesium ions and thiamine diphosphate. In terms of biological role, involved in the anaerobic metabolism of phenylalanine and phenylacetate. Catalyzes the oxidative decarboxylation of phenylglyoxylate to benzoyl-CoA and CO(2). It can also react slowly with 2-oxo-3-methylbutanoate and use different electron acceptors such as benzyl viologen, methyl viologen, FAD or FMN, but NAD seems to be the physiological electron acceptor. Also catalyzes an isotope exchange between CO(2) and the carboxyl group which proves partial or complete reversibility of the oxidative decarboxylation reaction. The chain is NADH-dependent phenylglyoxylate dehydrogenase subunit alpha (padG) from Aromatoleum evansii (Azoarcus evansii).